The sequence spans 103 residues: MYAVFQSGGKQHRVSEGQTIRLEKLDIATGEAVEFDQILMIANGEDIKIGVPYVDGGKIKAEVVAHGRGEKIKIVKFRRRKHHRKQQGHRQWFTDVKITGISA.

It belongs to the bacterial ribosomal protein bL21 family. In terms of assembly, part of the 50S ribosomal subunit. Contacts protein L20.

Functionally, this protein binds to 23S rRNA in the presence of protein L20. The sequence is that of Large ribosomal subunit protein bL21 from Serratia proteamaculans (strain 568).